Reading from the N-terminus, the 415-residue chain is Polyadenylate-binding protein RBP45C (415 aa).

The interval 1–77 (MMQQPPPASN…GGSQNPGSAG (77 aa)) is disordered. The segment covering 23-64 (QQAYLQQQQSWMMQHQQQQQGQPPAGWNQQSAPSSGQPQQQQ) has biased composition (low complexity). RRM domains follow at residues 80-160 (RSLW…WAQL), 173-252 (HTVF…PAAN), and 278-350 (TTIF…WGRS). The span at 344 to 356 (RLSWGRSPSNKQT) shows a compositional bias: polar residues. The disordered stretch occupies residues 344–369 (RLSWGRSPSNKQTQPDQAQYGGGGGY).

The protein belongs to the polyadenylate-binding RBP45 family. In terms of assembly, interacts with the poly(A) tail of mRNA in nucleus. In terms of tissue distribution, mostly expressed in seedlings and stems, and, to a lower extent, in leaves and flowers.

It localises to the nucleus. Its function is as follows. Heterogeneous nuclear ribonucleoprotein (hnRNP)-protein binding the poly(A) tail of mRNA and probably involved in some steps of pre-mRNA maturation. The polypeptide is Polyadenylate-binding protein RBP45C (RBP45C) (Arabidopsis thaliana (Mouse-ear cress)).